A 375-amino-acid chain; its full sequence is Carbamoyl phosphate synthase small chain (375 aa).

Residues 1-186 (MKAILALEDG…IVDGTYAWPG (186 aa)) are CPSase. Residues Ser45, Gly238, and Gly240 each contribute to the L-glutamine site. In terms of domain architecture, Glutamine amidotransferase type-1 spans 190–375 (RLVVFDMGIK…RNLVRKETGK (186 aa)). Cys265 (nucleophile) is an active-site residue. The L-glutamine site is built by Leu266, Gln269, Asn307, Gly309, and Phe310. Active-site residues include His348 and Glu350.

This sequence belongs to the CarA family. In terms of assembly, composed of two chains; the small (or glutamine) chain promotes the hydrolysis of glutamine to ammonia, which is used by the large (or ammonia) chain to synthesize carbamoyl phosphate. Tetramer of heterodimers (alpha,beta)4.

The catalysed reaction is hydrogencarbonate + L-glutamine + 2 ATP + H2O = carbamoyl phosphate + L-glutamate + 2 ADP + phosphate + 2 H(+). It carries out the reaction L-glutamine + H2O = L-glutamate + NH4(+). The protein operates within amino-acid biosynthesis; L-arginine biosynthesis; carbamoyl phosphate from bicarbonate: step 1/1. It participates in pyrimidine metabolism; UMP biosynthesis via de novo pathway; (S)-dihydroorotate from bicarbonate: step 1/3. Functionally, small subunit of the glutamine-dependent carbamoyl phosphate synthetase (CPSase). CPSase catalyzes the formation of carbamoyl phosphate from the ammonia moiety of glutamine, carbonate, and phosphate donated by ATP, constituting the first step of 2 biosynthetic pathways, one leading to arginine and/or urea and the other to pyrimidine nucleotides. The small subunit (glutamine amidotransferase) binds and cleaves glutamine to supply the large subunit with the substrate ammonia. This Solidesulfovibrio magneticus (strain ATCC 700980 / DSM 13731 / RS-1) (Desulfovibrio magneticus) protein is Carbamoyl phosphate synthase small chain.